Here is a 435-residue protein sequence, read N- to C-terminus: GPI-anchor transamidase component PIGU (435 aa).

The Cytoplasmic segment spans residues 1–3 (MAA). The chain crosses the membrane as a helical span at residues 4–22 (PLALVLVVAVTVRAALFRS). Residues 23-78 (SLAEFISERVEVVSPLSSWKRVVEGLSLLDLGVSPYSGAVFHETPLIIYLFHFLID) are Lumenal-facing. Residues 79 to 99 (YAELVFMITDALTAIALYFAI) traverse the membrane as a helical segment. Residues 100–136 (QDFNKVVFKKQKLLLELDQYAPDVAELIRTPMEMRYI) are Cytoplasmic-facing. 4 helical membrane passes run 137 to 158 (PLKVALFYLLNPYTILSCVAKS), 159 to 178 (TCAINNTLIAFFILTTIKGS), 179 to 194 (VFLSAIFLALATYQTL), and 195 to 205 (YPVTLFAPGLL). The Cytoplasmic portion of the chain corresponds to 206–222 (YLLQRQYIPVKVKSKAF). Position 216 (Lys-216) interacts with a cardiolipin. A helical membrane pass occupies residues 223-244 (WIFSWEYAMMYIGSLVVIVCLS). The Lumenal segment spans residues 245-286 (FFLLSSWDFIPAVYGFILSVPDLTPNIGLFWYFFAEMFEHFS). The chain crosses the membrane as a helical span at residues 287 to 306 (LFFVCVFQINVFFYTVPLAI). The Cytoplasmic segment spans residues 307–311 (KLKEH). Position 309 (Lys-309) interacts with a cardiolipin. Helical transmembrane passes span 312 to 331 (PIFFMFIQIAIISIFKSYPT) and 332 to 345 (VGDVALYMAFFPVW). The Cytoplasmic segment spans residues 346–354 (NHLYRFLRN). Residues 355–372 (VFVLTCIIVVCSLLFPVL) form a helical membrane-spanning segment. The Lumenal portion of the chain corresponds to 373-384 (WHLWIYAGSANS). 2 residues coordinate a 2-acyl-6-[6-phosphoethanolamine-alpha-D-mannosyl-(1-&gt;2)-6-phosphoethanolamine-alpha-D-mannosyl-(1-&gt;6)-2-phosphoethanolamine-alpha-D-mannosyl-(1-&gt;4)-alpha-D-glucosaminyl]-1-(1-radyl,2-acyl-sn-glycero-3-phospho)-1D-myo-inositol: Asn-383 and Asn-385. The chain crosses the membrane as a helical span at residues 385 to 406 (NFFYAITLTFNVGQILLISDYF). Over 407 to 435 (YAFLRREYYLTHGLYLTAKDGTEAMLVLK) the chain is Cytoplasmic.

It belongs to the PIGU family. As to quaternary structure, heteropentamer. Part of the GPI-anchor transamidase complex, consisting of PIGK, PIGT, PIGS, PIGU and GAA1.

It localises to the endoplasmic reticulum membrane. It participates in glycolipid biosynthesis; glycosylphosphatidylinositol-anchor biosynthesis. In terms of biological role, component of the glycosylphosphatidylinositol-anchor (GPI-anchor) transamidase (GPI-T) complex that catalyzes the formation of the linkage between a proprotein and a GPI-anchor and participates in GPI anchored protein biosynthesis. Binds the lipid portion of GPI-anchor. May act as an organizer in the transmembrane layer to recruit other subunits, and thus is essential for assembly of the complex. The sequence is that of GPI-anchor transamidase component PIGU from Cricetulus griseus (Chinese hamster).